The primary structure comprises 857 residues: MRGGALLCGQVQDEIEQLSRESSHFSLSTGILPSLGARSNRRVKLRRFVVSPYDHKYRIWEAFLVVLVVYTAWVSPFEFGFLRKPRPPLSITDNIVNAFFAIDIIMTFFVGYLDKSTYLIVDDRKQIAFKYLRSWFLLDLVSTIPSEAAMRISSQSYGLFNMLRLWRLRRVGALFARLEKDRNFNYFWVRCAKLVCVTLFAVHCAACFYYLIAARNSNPAKTWIGANVANFLEESLWMRYVTSMYWSITTLTTVGYGDLHPVNTKEMIFDIFYMLFNLGLTAYLIGNMTNLVVHGTSRTRNFRDTIQAASNFAHRNHLPPRLQDQMLAHLCLKYRTDSEGLQQQETLDALPKAIRSSISHFLFYSLMDKVYLFRGVSNDLLFQLVSEMKAEYFPPKEDVILQNEAPTDFYILVNGTADLVDVDTGTESIVREVKAGDIIGEIGVLCYRPQLFTVRTKRLCQLLRMNRTTFLNIIQANVGDGTIIMNNLLQHLKEMNDPVMTNVLLEIENMLARGKMDLPLNLCFAAIREDDLLLHQLLKRGLDPNESDNNGRTPLHIAASKGTLNCVLLLLEYHADPNCRDAEGSVPLWEAMVEGHEKVVKVLLEHGSTIDAGDVGHFACTAAEQGNLKLLKEIVLHGGDVTRPRATGTSALHTAVCEENIEMVKYLLEQGADVNKQDMHGWTPRDLAEQQGHEDIKALFREKLHERRVHIETSSSVPILKTGIRFLGRFTSEPNIRPASREVSFRIRETRARRKTNNFDNSLFGILANQSVPKNGLATVDEGRTGNPVRVTISCAEKDDIAGKLVLLPGSFKELLELGSNKFGIVATKVMNKDNNAEIDDVDVIRDGDHLIFATDS.

The Cytoplasmic portion of the chain corresponds to 1 to 61 (MRGGALLCGQ…PYDHKYRIWE (61 aa)). A helical transmembrane segment spans residues 62–82 (AFLVVLVVYTAWVSPFEFGFL). Residues 83-90 (RKPRPPLS) are Extracellular-facing. A helical transmembrane segment spans residues 91 to 111 (ITDNIVNAFFAIDIIMTFFVG). Residues 112 to 134 (YLDKSTYLIVDDRKQIAFKYLRS) are Cytoplasmic-facing. Residues 135 to 155 (WFLLDLVSTIPSEAAMRISSQ) form a helical membrane-spanning segment. Residues 156-158 (SYG) lie on the Extracellular side of the membrane. The helical; Voltage-sensor transmembrane segment at 159–179 (LFNMLRLWRLRRVGALFARLE) threads the bilayer. Residues 180 to 193 (KDRNFNYFWVRCAK) lie on the Cytoplasmic side of the membrane. A helical transmembrane segment spans residues 194–214 (LVCVTLFAVHCAACFYYLIAA). Topologically, residues 215–241 (RNSNPAKTWIGANVANFLEESLWMRYV) are extracellular. Positions 242–261 (TSMYWSITTLTTVGYGDLHP) form an intramembrane region, pore-forming. Residues 262 to 265 (VNTK) are Extracellular-facing. Residues 266–286 (EMIFDIFYMLFNLGLTAYLIG) form a helical membrane-spanning segment. The Cytoplasmic segment spans residues 287–857 (NMTNLVVHGT…GDHLIFATDS (571 aa)). Position 372 to 493 (372 to 493 (LFRGVSNDLL…IMNNLLQHLK (122 aa))) interacts with a nucleoside 3',5'-cyclic phosphate. ANK repeat units follow at residues 515-546 (KMDLPLNLCFAAIREDDLLLHQLLKRGLDPNE), 550-579 (NGRTPLHIAASKGTLNCVLLLLEYHADPNC), 583-612 (EGSVPLWEAMVEGHEKVVKVLLEHGSTIDA), 614-643 (DVGHFACTAAEQGNLKLLKEIVLHGGDVTR), 647-676 (TGTSALHTAVCEENIEMVKYLLEQGADVNK), and 680-709 (HGWTPRDLAEQQGHEDIKALFREKLHERRV). Residues 790–857 (RVTISCAEKD…GDHLIFATDS (68 aa)) form the KHA domain.

This sequence belongs to the potassium channel family. Plant (TC 1.A.1.4) subfamily. In terms of assembly, the potassium channel is probably composed of a homo- or heterotetrameric complex of pore-forming subunits. Possible heteromultimer with AKT2 or KAT3. Part of a K(+)-channel calcium-sensing kinase/phosphatase complex composed by a calcium sensor CBL (CBL1, CBL2, CBL3 or CBL9), a kinase CIPK (CIPK6, CIPK16 or CIPK23), a phosphatase PP2C (AIP1) and a K(+)-channel (AKT1). Interacts directly with AIP1, CBL10, CIPK6, CIPK16 and CIPK23. Phosphorylated by CIPK proteins CIPK6, CIPK16 and CIPK23. The activation by phosphorylation is induced by low K(+) conditions and stimulates K(+) uptake and relocation. Dephosphorylation by AIP1 repressed the transport activity. As to expression, preferentially expressed in the peripheral cell layers of root mature including root cortex and root hairs. Detected also, at a lower level, in the mesophyll of the leaves and at restricted sites corresponding to hydathodes and guard cells.

The protein localises to the cell membrane. Its function is as follows. Highly selective inward-rectifying potassium channel that mediate potassium uptake by plant roots in response to low K(+) conditions, by a calcium-, CBL-, and CIPK-dependent pathway. Positively regulated by phosphorylation by CIPK23. Negatively regulated by a kinase-independent regulatory mechanism involving a competing direct binding of CBL10. Involved in the stomatal regulation by monitoring the turgor pressure in guard cells. Assuming opened or closed conformations in response to the voltage difference across the membrane, the channel is activated by hyperpolarization. May interact with the cytoskeleton or with regulatory proteins. Is essential with POT5/HAK5 for high-affinity potassium uptake in roots during seedling establishment and postgermination growth under low potassium conditions. The polypeptide is Potassium channel AKT1 (AKT1) (Arabidopsis thaliana (Mouse-ear cress)).